A 278-amino-acid polypeptide reads, in one-letter code: Nucleotide-binding protein Tbd_0529 (278 aa).

8–15 (GLSGSGKS) is a binding site for ATP. 57–60 (DARS) provides a ligand contact to GTP.

This sequence belongs to the RapZ-like family.

Functionally, displays ATPase and GTPase activities. This is Nucleotide-binding protein Tbd_0529 from Thiobacillus denitrificans (strain ATCC 25259 / T1).